The following is a 469-amino-acid chain: Hydrogen cyanide synthase subunit HcnB (469 aa).

Heterotrimer of HcnA, HcnB and HcnC.

Its subcellular location is the cell membrane. It carries out the reaction glycine + 2 A = hydrogen cyanide + 2 AH2 + CO2. In terms of biological role, a three-component membrane-bound flavoenzyme that catalyzes the formation of hydrogen cyanide, a secondary metabolite, by transfer of electrons to a cyanide-resistant branch of the aerobic respiratory chain. Contributes to suppression of black root rot of tobacco. The sequence is that of Hydrogen cyanide synthase subunit HcnB from Pseudomonas protegens (strain DSM 19095 / LMG 27888 / CFBP 6595 / CHA0).